The sequence spans 354 residues: Guanine nucleotide-binding protein G(i) subunit alpha-3 (354 aa).

Gly-2 carries N-myristoyl glycine lipidation. A lipid anchor (S-palmitoyl cysteine) is attached at Cys-3. A G-alpha domain is found at 32-354 (KEVKLLLLGA…KNNLKECGLY (323 aa)). Residues 35–48 (KLLLLGAGESGKST) are G1 motif. GTP is bound by residues Gly-42, Glu-43, Ser-44, Gly-45, Lys-46, Ser-47, Thr-48, Asp-150, Ser-151, Leu-175, Arg-176, Thr-177, Arg-178, Val-179, Lys-180, Thr-181, Val-201, Gly-203, Asn-269, Lys-270, Asp-272, Leu-273, Cys-325, Ala-326, and Thr-327. Ser-47 is a binding site for Mg(2+). Residues 173-181 (DVLRTRVKT) form a G2 motif region. Thr-181 contacts Mg(2+). The G3 motif stretch occupies residues 196 to 205 (FKMFDVGGQR). Positions 265 to 272 (ILFLNKKD) are G4 motif. Residues 324–329 (TCATDT) form a G5 motif region.

This sequence belongs to the G-alpha family. G(i/o/t/z) subfamily. In terms of assembly, heterotrimeric G proteins are composed of 3 units; alpha, beta and gamma. The alpha subunit contains the guanine nucleotide binding site. GTP binding causes dissociation of the heterotrimer, liberating the individual subunits so that they can interact with downstream effector proteins. Forms a complex with CCDC88A/GIV and EGFR which leads to enhanced EGFR signaling and triggering of cell migration; ligand stimulation is required for recruitment of GNAI3 to the complex. Interacts (inactive GDP-bound form) with CCDC88A/GIV (via GBA motif); the interaction leads to activation of GNAI3. Interacts (inactive GDP-bound form) with CCDC88C/DAPLE (via GBA motif); the interaction leads to activation of GNAI3. Interacts (inactive GDP-bound form) with NUCB1 (via GBA motif) and NUCB2 (via GBA motif); the interaction leads to activation of GNAI3. Interacts (inactive GDP-bound form) with PLCD4 (via GBA motif); the interaction leads to activation of GNAI3. Interacts with INSR; the interaction is probably mediated by CCDC88A/GIV. Interacts with GPSM1. Interacts (GDP-bound form) with GPSM2 (via GoLoco domains). Does not interact with RGS2. Interacts with RGS8 and RGS10; this strongly enhances the intrinsic GTPase activity. Interacts with RGS16; this strongly enhances the intrinsic GTPase activity. Interacts with RGS12. Interacts (via active GTP- or inactive GDP-bound form) with RGS14. Interacts (via active GTP-bound form) with TRPC5 (via ANK repeats) in a homotetrameric ion channel; the interaction is direct and activates the channel activity.

The protein localises to the cytoplasm. Its subcellular location is the cell membrane. It localises to the cytoskeleton. It is found in the microtubule organizing center. The protein resides in the centrosome. Its function is as follows. Heterotrimeric guanine nucleotide-binding proteins (G proteins) function as transducers downstream of G protein-coupled receptors (GPCRs) in numerous signaling cascades. The alpha chain contains the guanine nucleotide binding site and alternates between an active, GTP-bound state and an inactive, GDP-bound state. Signaling by an activated GPCR promotes GDP release and GTP binding. The alpha subunit has a low GTPase activity that converts bound GTP to GDP, thereby terminating the signal. Both GDP release and GTP hydrolysis are modulated by numerous regulatory proteins. Signaling is mediated via effector proteins, such as adenylate cyclase. Inhibits adenylate cyclase activity, leading to decreased intracellular cAMP levels. Stimulates the activity of receptor-regulated K(+) channels. The active GTP-bound form prevents the association of RGS14 with centrosomes and is required for the translocation of RGS14 from the cytoplasm to the plasma membrane. May play a role in cell division. The active GTP-bound form activates the calcium permeant TRPC5 ion channels. In Cricetulus griseus (Chinese hamster), this protein is Guanine nucleotide-binding protein G(i) subunit alpha-3 (GNAI3).